A 419-amino-acid polypeptide reads, in one-letter code: MDKFRVQGRTRLSGEVAISGAKNAALPILFAALLAEEPVELQNVPKLKDIDTTIKLLNQLGTKIERNGSVFVDASGVNEFCAPYDLVKTMRASIWALGPLVARFGRGQVSLPGGCAIGARPVDLHITGLEQLGAEIKLEEGYVKASVDGRLKGAHIVMDKVSVGATVTIMSAATLATGTTVIENAAREPEIVDTANFLNTLGAKITGAGSDRITIEGVERLGGGVYRVLPDRIETGTFLIAAAVSGGKVMCRDTRPDTLDAVLAKLREAGADIEVGEDWISLDMHGKRPKAVTIRTAPHPGFPTDMQAQFSLLNLVAEGTGVITETIFENRFMHVPELIRMGAHAEIESNTVICHGVEQLSGAQVMATDLRASASLVIAGCIADGVTVVDRIYHIDRGYERIEDKLRALGANIERVKGE.

22 to 23 (KN) provides a ligand contact to phosphoenolpyruvate. R91 provides a ligand contact to UDP-N-acetyl-alpha-D-glucosamine. The Proton donor role is filled by C115. The residue at position 115 (C115) is a 2-(S-cysteinyl)pyruvic acid O-phosphothioketal. Residues 120-124 (RPVDL), 160-163 (KVSV), D305, and I327 contribute to the UDP-N-acetyl-alpha-D-glucosamine site.

Belongs to the EPSP synthase family. MurA subfamily.

It localises to the cytoplasm. The catalysed reaction is phosphoenolpyruvate + UDP-N-acetyl-alpha-D-glucosamine = UDP-N-acetyl-3-O-(1-carboxyvinyl)-alpha-D-glucosamine + phosphate. The protein operates within cell wall biogenesis; peptidoglycan biosynthesis. Its function is as follows. Cell wall formation. Adds enolpyruvyl to UDP-N-acetylglucosamine. In Serratia proteamaculans (strain 568), this protein is UDP-N-acetylglucosamine 1-carboxyvinyltransferase.